The sequence spans 336 residues: DNA topoisomerase 1B (336 aa).

One can recognise a Topo IB-type catalytic domain in the interval E79–E336. Residue Y294 is the O-(3'-phospho-DNA)-tyrosine intermediate of the active site.

Belongs to the type IB topoisomerase family. In terms of assembly, monomer.

It localises to the virion. It catalyses the reaction ATP-independent breakage of single-stranded DNA, followed by passage and rejoining.. Releases the supercoiling and torsional tension of DNA introduced during the DNA replication and transcription by transiently cleaving and rejoining one strand of the DNA duplex. Introduces a single-strand break via transesterification at a target site in duplex DNA. The scissile phosphodiester is attacked by the catalytic tyrosine of the enzyme, resulting in the formation of a DNA-(3'-phosphotyrosyl)-enzyme intermediate and the expulsion of a 5'-OH DNA strand. The free DNA strand then undergoes passage around the unbroken strand thus removing DNA supercoils. Finally, in the religation step, the DNA 5'-OH attacks the covalent intermediate to expel the active-site tyrosine and restore the DNA phosphodiester backbone. Cleaves DNA after CCCTT sequence. The protein is DNA topoisomerase 1B (TOP1E) of Acanthamoeba polyphaga mimivirus (APMV).